A 327-amino-acid chain; its full sequence is 2-keto-3-deoxygluconate permease (327 aa).

10 helical membrane passes run 10–30, 42–62, 73–93, 95–115, 139–159, 163–183, 199–219, 224–244, 254–274, and 289–309; these read IPGG…TFSP, GMIT…GASI, KSGT…AIAS, IIPE…LALV, AGAF…IILG, IASF…VGFA, VQTL…LTVI, LLGI…LIIA, TAGI…VLIA, and SLVA…TSIW.

Belongs to the KdgT transporter family.

Its subcellular location is the cell inner membrane. The catalysed reaction is 2-dehydro-3-deoxy-D-gluconate(in) + H(+)(in) = 2-dehydro-3-deoxy-D-gluconate(out) + H(+)(out). Its function is as follows. Catalyzes the proton-dependent uptake of 2-keto-3-deoxygluconate (KDG) into the cell. This Escherichia coli O7:K1 (strain IAI39 / ExPEC) protein is 2-keto-3-deoxygluconate permease.